A 268-amino-acid chain; its full sequence is Thymidylate synthase (268 aa).

R27 is a binding site for dUMP. H57 serves as a coordination point for (6R)-5,10-methylene-5,6,7,8-tetrahydrofolate. Position 132-133 (132-133) interacts with dUMP; the sequence is RR. The active-site Nucleophile is the C152. Residues 172–175, N183, and 213–215 each bind dUMP; these read RSAD and HVY. Residue D175 participates in (6R)-5,10-methylene-5,6,7,8-tetrahydrofolate binding. Position 267 (A267) interacts with (6R)-5,10-methylene-5,6,7,8-tetrahydrofolate.

Belongs to the thymidylate synthase family. Bacterial-type ThyA subfamily. As to quaternary structure, homodimer.

The protein resides in the cytoplasm. The enzyme catalyses dUMP + (6R)-5,10-methylene-5,6,7,8-tetrahydrofolate = 7,8-dihydrofolate + dTMP. Its pathway is pyrimidine metabolism; dTTP biosynthesis. Catalyzes the reductive methylation of 2'-deoxyuridine-5'-monophosphate (dUMP) to 2'-deoxythymidine-5'-monophosphate (dTMP) while utilizing 5,10-methylenetetrahydrofolate (mTHF) as the methyl donor and reductant in the reaction, yielding dihydrofolate (DHF) as a by-product. This enzymatic reaction provides an intracellular de novo source of dTMP, an essential precursor for DNA biosynthesis. This chain is Thymidylate synthase, found in Kineococcus radiotolerans (strain ATCC BAA-149 / DSM 14245 / SRS30216).